The following is a 553-amino-acid chain: Transcription factor 7-like 1 (553 aa).

Over residues 1 to 11 (MPQLNSGGGDE) the composition is skewed to gly residues. The interval 1 to 61 (MPQLNSGGGD…SENHSSDSDS (61 aa)) is interaction with CTNNB1. Disordered stretches follow at residues 1 to 77 (MPQL…EKPR), 183 to 213 (GTPP…PYYP), and 392 to 474 (SARD…LTTK). 2 stretches are compositionally biased toward basic and acidic residues: residues 17–32 (ELIR…EKSP) and 52–77 (SENH…EKPR). An interaction with AES and TLE4 region spans residues 109–312 (LGGHYLPNGA…SPNLITKPSV (204 aa)). The HMG box DNA-binding region spans 324-392 (IKKPLNAFML…LHSQLYPTWS (69 aa)). Residues 407-416 (KQSPEMEITK) are compositionally biased toward basic and acidic residues. The interaction with CTBP stretch occupies residues 408–553 (QSPEMEITKT…PLSLVTKSSD (146 aa)). The span at 444–463 (SPATPSAALASPAAPAATHS) shows a compositional bias: low complexity. Over residues 464 to 473 (EQAQPLSLTT) the composition is skewed to polar residues.

The protein belongs to the TCF/LEF family. As to quaternary structure, interacts with csnk1e, ctnnb1, ctbp, dact1 and gsk3b. May interact with ase and tle4. Post-translationally, phosphorylated. Phosphorylation by csnk1e promotes binding to ctnnb1 while phosphorylation by gsk3b may reverse this effect.

The protein localises to the nucleus. Its function is as follows. Participates in the Wnt signaling pathway. Binds to DNA and acts as a repressor in the absence of ctnnb1, and as an activator in its presence. Required early in development for the establishment of the dorsal body axis in response to maternal Wnt signaling. In Xenopus tropicalis (Western clawed frog), this protein is Transcription factor 7-like 1 (tcf7l1).